The primary structure comprises 400 residues: Golgin-45 (400 aa).

Residues 1–36 (MEKMTTLKSFESKGILTSTPIRGAGDGMETEEPPKS) are disordered. A Tankyrase-binding motif motif is present at residues 22–26 (RGAGD). S53 carries the post-translational modification Phosphoserine. A coiled-coil region spans residues 126 to 263 (LSEVKKVLEK…LSEREQFRQE (138 aa)). S356 carries the post-translational modification Phosphoserine. The tract at residues 394-400 (QGELLAL) is essential for interaction with GORASP2.

Interacts with GORASP2. Interacts with the GTP-bound form of RAB2, but not with other Golgi Rab proteins. Identified in a complex with RAB2 and GORASP2. ADP-ribosylated by tankyrase TNKS and TNKS2. Poly-ADP-ribosylated protein is recognized by RNF146, followed by ubiquitination. Post-translationally, ubiquitinated by RNF146 when poly-ADP-ribosylated, leading to its degradation.

It localises to the golgi apparatus membrane. Its function is as follows. Required for normal Golgi structure and for protein transport from the endoplasmic reticulum (ER) through the Golgi apparatus to the cell surface. The protein is Golgin-45 of Rattus norvegicus (Rat).